A 313-amino-acid polypeptide reads, in one-letter code: 4-hydroxy-3-methylbut-2-enyl diphosphate reductase (313 aa).

Cys-12 is a [4Fe-4S] cluster binding site. Residues His-41 and His-74 each coordinate (2E)-4-hydroxy-3-methylbut-2-enyl diphosphate. Residues His-41 and His-74 each contribute to the dimethylallyl diphosphate site. Isopentenyl diphosphate contacts are provided by His-41 and His-74. Position 96 (Cys-96) interacts with [4Fe-4S] cluster. His-124 serves as a coordination point for (2E)-4-hydroxy-3-methylbut-2-enyl diphosphate. Residue His-124 coordinates dimethylallyl diphosphate. His-124 provides a ligand contact to isopentenyl diphosphate. The Proton donor role is filled by Glu-126. Position 167 (Thr-167) interacts with (2E)-4-hydroxy-3-methylbut-2-enyl diphosphate. Residue Cys-197 coordinates [4Fe-4S] cluster. Residues Ser-225, Ser-226, Asn-227, and Ser-269 each coordinate (2E)-4-hydroxy-3-methylbut-2-enyl diphosphate. Residues Ser-225, Ser-226, Asn-227, and Ser-269 each coordinate dimethylallyl diphosphate. Ser-225, Ser-226, Asn-227, and Ser-269 together coordinate isopentenyl diphosphate.

It belongs to the IspH family. It depends on [4Fe-4S] cluster as a cofactor.

The enzyme catalyses isopentenyl diphosphate + 2 oxidized [2Fe-2S]-[ferredoxin] + H2O = (2E)-4-hydroxy-3-methylbut-2-enyl diphosphate + 2 reduced [2Fe-2S]-[ferredoxin] + 2 H(+). The catalysed reaction is dimethylallyl diphosphate + 2 oxidized [2Fe-2S]-[ferredoxin] + H2O = (2E)-4-hydroxy-3-methylbut-2-enyl diphosphate + 2 reduced [2Fe-2S]-[ferredoxin] + 2 H(+). Its pathway is isoprenoid biosynthesis; dimethylallyl diphosphate biosynthesis; dimethylallyl diphosphate from (2E)-4-hydroxy-3-methylbutenyl diphosphate: step 1/1. The protein operates within isoprenoid biosynthesis; isopentenyl diphosphate biosynthesis via DXP pathway; isopentenyl diphosphate from 1-deoxy-D-xylulose 5-phosphate: step 6/6. Functionally, catalyzes the conversion of 1-hydroxy-2-methyl-2-(E)-butenyl 4-diphosphate (HMBPP) into a mixture of isopentenyl diphosphate (IPP) and dimethylallyl diphosphate (DMAPP). Acts in the terminal step of the DOXP/MEP pathway for isoprenoid precursor biosynthesis. The protein is 4-hydroxy-3-methylbut-2-enyl diphosphate reductase of Photobacterium profundum (strain SS9).